Reading from the N-terminus, the 317-residue chain is Ribosomal RNA small subunit methyltransferase H (317 aa).

Residues 39 to 41 (GGH), Asp59, Phe83, Asp104, and Gln111 contribute to the S-adenosyl-L-methionine site.

This sequence belongs to the methyltransferase superfamily. RsmH family.

The protein localises to the cytoplasm. The enzyme catalyses cytidine(1402) in 16S rRNA + S-adenosyl-L-methionine = N(4)-methylcytidine(1402) in 16S rRNA + S-adenosyl-L-homocysteine + H(+). Functionally, specifically methylates the N4 position of cytidine in position 1402 (C1402) of 16S rRNA. In Paraburkholderia phymatum (strain DSM 17167 / CIP 108236 / LMG 21445 / STM815) (Burkholderia phymatum), this protein is Ribosomal RNA small subunit methyltransferase H.